Consider the following 158-residue polypeptide: U-limacoditoxin(8)-Dv66 (158 aa).

The first 24 residues, 1–24 (MALRAPWIALCCVLAVLFVVPAAT), serve as a signal peptide directing secretion. Positions 25–32 (RDEERQKR) are excised as a propeptide. Tandem repeats lie at residues 33–78 (GVDF…RQKR) and 79–124 (GVDF…RQKR). A 3 X 46 AA tandem repeats region spans residues 33-158 (GVDFGLQRGF…AQDPHGPGRK (126 aa)). A Proline amide modification is found at proline 63. A propeptide spanning residues 64–78 (GRKRRDAYEMERQKR) is cleaved from the precursor. Residues 101–120 (ARAQDPHGPGRKRRDAYEME) form a disordered region. Proline 109 is modified (proline amide). Residues 110–124 (GRKRRDAYEMERQKR) constitute a propeptide that is removed on maturation. The 3; half-length repeat unit spans residues 125–158 (GVDFGLQRGFSGSELAKLKLALARAQDPHGPGRK). The residue at position 155 (proline 155) is a Proline amide.

It belongs to the diuretic hormone class 2 family. Expressed by the venom secretory cell of the spine. The spine is a cuticular structure containing a single large nucleated venom-secreting cell at its base. It is an independent unit capable of producing, storing and injecting venom. On the back of D.vulnerans caterpillars, spines are grouped together by 50 to 100 to form scoli, of which there are eight in D.vulnerans.

Its subcellular location is the secreted. Its function is as follows. Probable toxin. Does not show insecticidal, antimicrobial and antiparasitic activities. Does not induce increase in intracellular calcium in mouse DRG neurons, suggesting that it does not induce pain. In Doratifera vulnerans (Mottled cup moth), this protein is U-limacoditoxin(8)-Dv66.